A 224-amino-acid polypeptide reads, in one-letter code: MARYLLLASTLLLAACSSTPKKPIADDPFYAPVYPEAPPTKIAATGSIYQDSQAASLYSDIRAHKVGDIITIVLKEATQAKKSAGNQIKKGSDMTLDPIYAGGSNVSLGGIPLDLRYKDSMNTKRESDADQSNSLDGSISANIMQVLNNGNLVVRGEKWISINNGDEFIRVTGIVRSQDIKPDNTIDSTRMANARIQYSGTGTFAEAQKVGWLSQFFMSDWWPF.

Positions 1-15 (MARYLLLASTLLLAA) are cleaved as a signal peptide. Residue cysteine 16 is the site of N-palmitoyl cysteine attachment. Cysteine 16 carries S-diacylglycerol cysteine lipidation.

This sequence belongs to the FlgH family. As to quaternary structure, the basal body constitutes a major portion of the flagellar organelle and consists of four rings (L,P,S, and M) mounted on a central rod.

It is found in the cell outer membrane. The protein localises to the bacterial flagellum basal body. Assembles around the rod to form the L-ring and probably protects the motor/basal body from shearing forces during rotation. This chain is Flagellar L-ring protein, found in Shewanella sp. (strain ANA-3).